The primary structure comprises 474 residues: Transcription termination factor Rho (474 aa).

A disordered region spans residues 1 to 60 (MTEELDNTPSPAGDIPQETLPKPLPAPEETAGEQPAAAPEENRGNAVREEEEAAPVLEQI). The 76-residue stretch at 107–182 (EVVVSGVMEQ…ASVISVEDIP (76 aa)) folds into the Rho RNA-BD domain. Residues 226–231 (GKGQRG), 238–243 (RGGKTV), and Arg-269 contribute to the ATP site.

This sequence belongs to the Rho family. In terms of assembly, homohexamer. The homohexamer assembles into an open ring structure.

Its function is as follows. Facilitates transcription termination by a mechanism that involves Rho binding to the nascent RNA, activation of Rho's RNA-dependent ATPase activity, and release of the mRNA from the DNA template. This is Transcription termination factor Rho from Akkermansia muciniphila (strain ATCC BAA-835 / DSM 22959 / JCM 33894 / BCRC 81048 / CCUG 64013 / CIP 107961 / Muc).